The sequence spans 119 residues: Large ribosomal subunit protein uL18 (119 aa).

Belongs to the universal ribosomal protein uL18 family. As to quaternary structure, part of the 50S ribosomal subunit; part of the 5S rRNA/L5/L18/L25 subcomplex. Contacts the 5S and 23S rRNAs.

This is one of the proteins that bind and probably mediate the attachment of the 5S RNA into the large ribosomal subunit, where it forms part of the central protuberance. The sequence is that of Large ribosomal subunit protein uL18 from Oceanobacillus iheyensis (strain DSM 14371 / CIP 107618 / JCM 11309 / KCTC 3954 / HTE831).